A 432-amino-acid chain; its full sequence is 3-phosphoshikimate 1-carboxyvinyltransferase (432 aa).

Residues Lys23, Ser24, and Arg28 each contribute to the 3-phosphoshikimate site. Lys23 is a binding site for phosphoenolpyruvate. Gly95 and Arg123 together coordinate phosphoenolpyruvate. 4 residues coordinate 3-phosphoshikimate: Ser167, Gln169, Asp317, and Lys344. Phosphoenolpyruvate is bound at residue Gln169. The active-site Proton acceptor is Asp317. The phosphoenolpyruvate site is built by Arg348 and Arg390.

Belongs to the EPSP synthase family. As to quaternary structure, monomer.

The protein localises to the cytoplasm. It catalyses the reaction 3-phosphoshikimate + phosphoenolpyruvate = 5-O-(1-carboxyvinyl)-3-phosphoshikimate + phosphate. It participates in metabolic intermediate biosynthesis; chorismate biosynthesis; chorismate from D-erythrose 4-phosphate and phosphoenolpyruvate: step 6/7. Functionally, catalyzes the transfer of the enolpyruvyl moiety of phosphoenolpyruvate (PEP) to the 5-hydroxyl of shikimate-3-phosphate (S3P) to produce enolpyruvyl shikimate-3-phosphate and inorganic phosphate. In Staphylococcus aureus (strain N315), this protein is 3-phosphoshikimate 1-carboxyvinyltransferase.